The primary structure comprises 514 residues: Leucine-rich repeat-containing protein 14B (514 aa).

One copy of the LRR 1; degenerate repeat lies at 104–141 (RRRLRVADLTGIRDVQVQRCPCGRALGRWGRTQLLART). The stretch at 185-209 (RVHCPSFRADSLSPSQLLHVLRLAG) is one LRR 2; degenerate repeat. The LRR 4; degenerate repeat unit spans residues 238-277 (FPRLASLTLPTKAFDAPPTYASTPDGEDPLLASIARELSK). 5 LRR repeats span residues 278 to 302 (MAQLTELSVAFSTLTGKIPTLLGPL), 303 to 334 (QTPLRVLDLANCALNHTDMAFLADCAHAAHLE), 335 to 350 (VLDLSGHNLVSLYPST), 359 to 386 (SRTLRILTLEECGIVDSHVGMLILGLSP), and 387 to 411 (CHRLRQLKFLGNPLSARALRRLFTA).

This sequence belongs to the PRAME family. LRRC14 subfamily.

This Homo sapiens (Human) protein is Leucine-rich repeat-containing protein 14B.